Consider the following 383-residue polypeptide: MLRSLCSIAVRLGGARQPRLLSSAASGDGNDGKGAKDAIDEDLLNAIEGVANNIHPQNGSEKKSLKNTLINRLVANEKASFDAAAASASSEMLDDQALIGLLADVAGDAKVEKKLPPKSAQLRQEKRGLVLLRKEIFYQAVQSGFTTEEARVKSETIVNEAQIKLQEQRKALLNDVREKVEQEEVEETERSEKDQKLFTMALEFMEKIYKDDLISSAVRKPVKVDNDAIKLFNQKPLGIWKKGEKYEDFSLGFWKQWDERAARISNGSFGPTNSFEEQIEWTTKGKQWEYPIDNEFKMGDESNVSFIDHVFLERHLPSLGIPKSGPIAHFMHLVCVGLSKNPYMTAAKKREHLKWFADYFNTEKQKLVHKLHEQEQIAAQNAL.

The N-terminal 21 residues, 1–21 (MLRSLCSIAVRLGGARQPRLL), are a transit peptide targeting the mitochondrion. Positions 158-187 (VNEAQIKLQEQRKALLNDVREKVEQEEVEE) form a coiled coil.

This sequence belongs to the mitochondrion-specific ribosomal protein mS31 family. Component of the mitochondrial ribosome small subunit (28S) which comprises a 12S rRNA and about 30 distinct proteins.

It localises to the mitochondrion. The protein is Small ribosomal subunit protein mS31 (mrps-31) of Caenorhabditis elegans.